A 256-amino-acid polypeptide reads, in one-letter code: Trans-aconitate 2-methyltransferase (256 aa).

It belongs to the methyltransferase superfamily. Tam family.

It is found in the cytoplasm. The catalysed reaction is trans-aconitate + S-adenosyl-L-methionine = (E)-3-(methoxycarbonyl)pent-2-enedioate + S-adenosyl-L-homocysteine. Its function is as follows. Catalyzes the S-adenosylmethionine monomethyl esterification of trans-aconitate. The protein is Trans-aconitate 2-methyltransferase of Rhodopseudomonas palustris (strain BisA53).